The sequence spans 90 residues: Small ribosomal subunit protein uS15c (90 aa).

It belongs to the universal ribosomal protein uS15 family. As to quaternary structure, part of the 30S ribosomal subunit.

The protein localises to the plastid. Its subcellular location is the chloroplast. The sequence is that of Small ribosomal subunit protein uS15c (rps15) from Gossypium barbadense (Sea Island cotton).